Reading from the N-terminus, the 157-residue chain is 2-C-methyl-D-erythritol 2,4-cyclodiphosphate synthase (157 aa).

A divalent metal cation-binding residues include Asp8 and His10. 4-CDP-2-C-methyl-D-erythritol 2-phosphate is bound by residues 8-10 (DVH) and 34-35 (HS). Residue His42 coordinates a divalent metal cation. 4-CDP-2-C-methyl-D-erythritol 2-phosphate contacts are provided by residues 56 to 58 (DIG), 132 to 135 (TTNE), Phe139, and Arg142.

This sequence belongs to the IspF family. As to quaternary structure, homotrimer. The cofactor is a divalent metal cation.

The catalysed reaction is 4-CDP-2-C-methyl-D-erythritol 2-phosphate = 2-C-methyl-D-erythritol 2,4-cyclic diphosphate + CMP. It participates in isoprenoid biosynthesis; isopentenyl diphosphate biosynthesis via DXP pathway; isopentenyl diphosphate from 1-deoxy-D-xylulose 5-phosphate: step 4/6. Functionally, involved in the biosynthesis of isopentenyl diphosphate (IPP) and dimethylallyl diphosphate (DMAPP), two major building blocks of isoprenoid compounds. Catalyzes the conversion of 4-diphosphocytidyl-2-C-methyl-D-erythritol 2-phosphate (CDP-ME2P) to 2-C-methyl-D-erythritol 2,4-cyclodiphosphate (ME-CPP) with a corresponding release of cytidine 5-monophosphate (CMP). The polypeptide is 2-C-methyl-D-erythritol 2,4-cyclodiphosphate synthase (Symbiobacterium thermophilum (strain DSM 24528 / JCM 14929 / IAM 14863 / T)).